The following is a 434-amino-acid chain: Trigger factor (434 aa).

The 86-residue stretch at G160–P245 folds into the PPIase FKBP-type domain.

The protein belongs to the FKBP-type PPIase family. Tig subfamily.

The protein localises to the cytoplasm. The enzyme catalyses [protein]-peptidylproline (omega=180) = [protein]-peptidylproline (omega=0). Involved in protein export. Acts as a chaperone by maintaining the newly synthesized protein in an open conformation. Functions as a peptidyl-prolyl cis-trans isomerase. The polypeptide is Trigger factor (Shewanella putrefaciens (strain CN-32 / ATCC BAA-453)).